We begin with the raw amino-acid sequence, 156 residues long: MPRRRVVGQRKILPDPKFHNELLAKFINILMVDGKKSTAEKIVYGALDILAQKSEKDQLELFEEALDNIRPSVEVKSRRVGGSTYQVPVEVRPVRRNALAMRWLVEAARKRGEKSMAQRLANEMLDASDSKGSAVKKREDVHRMADANKAFAHYRW.

This sequence belongs to the universal ribosomal protein uS7 family. Part of the 30S ribosomal subunit. Contacts proteins S9 and S11.

In terms of biological role, one of the primary rRNA binding proteins, it binds directly to 16S rRNA where it nucleates assembly of the head domain of the 30S subunit. Is located at the subunit interface close to the decoding center, probably blocks exit of the E-site tRNA. This Colwellia psychrerythraea (strain 34H / ATCC BAA-681) (Vibrio psychroerythus) protein is Small ribosomal subunit protein uS7.